The sequence spans 210 residues: Putative tyrosine-protein phosphatase OCA1 (210 aa).

The 161-residue stretch at 44–204 (NFCPVERYLY…EIDREKAPNW (161 aa)) folds into the Tyrosine-protein phosphatase domain. The active-site Phosphocysteine intermediate is Cys-140.

The protein belongs to the protein-tyrosine phosphatase family.

Its subcellular location is the cytoplasm. It carries out the reaction O-phospho-L-tyrosyl-[protein] + H2O = L-tyrosyl-[protein] + phosphate. Its function is as follows. Putative tyrosine-protein phosphatase required for protection against superoxide stress. The chain is Putative tyrosine-protein phosphatase OCA1 (OCA1) from Kluyveromyces lactis (strain ATCC 8585 / CBS 2359 / DSM 70799 / NBRC 1267 / NRRL Y-1140 / WM37) (Yeast).